Reading from the N-terminus, the 206-residue chain is Small ribosomal subunit protein uS4A (206 aa).

The S4 RNA-binding domain maps to 98–164 (LRLDNVAYKL…EKFKTFAENP (67 aa)).

Belongs to the universal ribosomal protein uS4 family. In terms of assembly, part of the 30S ribosomal subunit. Contacts protein S5. The interaction surface between S4 and S5 is involved in control of translational fidelity.

In terms of biological role, one of the primary rRNA binding proteins, it binds directly to 16S rRNA where it nucleates assembly of the body of the 30S subunit. With S5 and S12 plays an important role in translational accuracy. The protein is Small ribosomal subunit protein uS4A (rspD1) of Clostridium acetobutylicum (strain ATCC 824 / DSM 792 / JCM 1419 / IAM 19013 / LMG 5710 / NBRC 13948 / NRRL B-527 / VKM B-1787 / 2291 / W).